The primary structure comprises 224 residues: Golgi to ER traffic protein 1 (224 aa).

The Lumenal segment spans residues 1-33 (MDEAIIVDAEFVAPVGTTAGEFVPIDRAPAAGL). Residues 34-53 (LLLVAFVVLYAKVISKLGKP) form a helical membrane-spanning segment. The Cytoplasmic segment spans residues 54–137 (AIQEFLWEII…RFFTIISSAI (84 aa)). The stretch at 102–124 (AKLDREYGKLKVEIEDINNLLTA) forms a coiled coil. A helical membrane pass occupies residues 138 to 158 (FLSTTGMKMFLRIKHRKAAIF). The Lumenal segment spans residues 159-182 (WLPKNAFPYPIEYILSFSSAPLGS). The chain crosses the membrane as a helical span at residues 183-199 (VSVSAWLMICDAAMDLI). Residues 200–224 (VTIFVALVVGVIGMLRSNKVKPKTA) lie on the Cytoplasmic side of the membrane.

Belongs to the WRB/GET1 family. Component of the Golgi to ER traffic (GET) complex, which is composed of GET1, GET2 and GET3. Within the complex, GET1 and GET2 form a heterotetramer which is stabilized by phosphatidylinositol binding and which binds to the GET3 homodimer.

The protein localises to the endoplasmic reticulum membrane. Its subcellular location is the golgi apparatus membrane. In terms of biological role, required for the post-translational delivery of tail-anchored (TA) proteins to the endoplasmic reticulum. Together with GET2, acts as a membrane receptor for soluble GET3, which recognizes and selectively binds the transmembrane domain of TA proteins in the cytosol. The GET complex cooperates with the HDEL receptor ERD2 to mediate the ATP-dependent retrieval of resident ER proteins that contain a C-terminal H-D-E-L retention signal from the Golgi to the ER. The sequence is that of Golgi to ER traffic protein 1 from Yarrowia lipolytica (strain CLIB 122 / E 150) (Yeast).